The sequence spans 605 residues: Leucine-rich repeat-containing protein 40 (605 aa).

Residues methionine 1–alanine 26 are disordered. LRR repeat units lie at residues aspartate 83–leucine 104, alanine 106–leucine 127, asparagine 129–glutamine 151, asparagine 152–leucine 173, isoleucine 175–leucine 196, glycine 198–methionine 219, asparagine 221–methionine 242, serine 244–threonine 265, lysine 266–asparagine 287, serine 290–leucine 311, glycine 313–proline 335, asparagine 336–lysine 357, phenylalanine 429–methionine 450, serine 453–leucine 475, lysine 476–methionine 497, arginine 499–isoleucine 520, threonine 522–lysine 543, lysine 546–cysteine 567, and serine 569–lysine 590.

This is Leucine-rich repeat-containing protein 40 (lrrc40) from Xenopus tropicalis (Western clawed frog).